The following is a 166-amino-acid chain: Small ribosomal subunit protein eS10 (166 aa).

Residues 95–166 form a disordered region; it reads RRQTRPETAR…FGRGRGQQPQ (72 aa). Over residues 98–129 the composition is skewed to basic and acidic residues; the sequence is TRPETARPRPKGLEGERPARLARGEGDRDAYR. Over residues 143–154 the composition is skewed to low complexity; that stretch reads AGAGAATEFQFR. The segment covering 155–166 has biased composition (gly residues); it reads GGFGRGRGQQPQ.

This sequence belongs to the eukaryotic ribosomal protein eS10 family. Component of the small ribosomal subunit.

The protein localises to the cytoplasm. It localises to the nucleus. The protein resides in the nucleolus. In terms of biological role, component of the 40S ribosomal subunit. The ribosome is a large ribonucleoprotein complex responsible for the synthesis of proteins in the cell. In Ictalurus punctatus (Channel catfish), this protein is Small ribosomal subunit protein eS10 (rps10).